Consider the following 90-residue polypeptide: Probable small nuclear ribonucleoprotein E (90 aa).

Positions 14-89 (VNLIFRYLQN…ITLIHAAQQE (76 aa)) constitute a Sm domain.

It belongs to the snRNP Sm proteins family. Core component of the spliceosomal U1, U2, U4 and U5 small nuclear ribonucleoproteins (snRNPs), the building blocks of the spliceosome.

Its subcellular location is the nucleus. It is found in the cytoplasm. The protein localises to the cytosol. Functionally, plays a role in pre-mRNA splicing as a core component of the spliceosomal U1, U2, U4 and U5 small nuclear ribonucleoproteins (snRNPs), the building blocks of the spliceosome. This is Probable small nuclear ribonucleoprotein E (snr-6) from Caenorhabditis elegans.